Here is a 555-residue protein sequence, read N- to C-terminus: E3 ubiquitin-protein ligase ARIH1 (555 aa).

Positions 1–47 (MDSDEGYNYEFDEDEECSEEDSGAEEEEDDDEDEPDDDNLDLGEVEL) are enriched in acidic residues. The interval 1 to 93 (MDSDEGYNYE…GGGGGPGHEQ (93 aa)) is disordered. The span at 65–90 (ETGGGGGSALGPGGGGGGGGGGGGPG) shows a compositional bias: gly residues. The segment at 103 to 151 (TAEQILQHMVECIREVNEVIQNPATITRILLSHFNWDKEKLMERYFDGN) is UBA-like. An N6-acetyllysine modification is found at K140. The segment at 180–391 (QDMPCQICYL…SAWYNCNRYN (212 aa)) is TRIAD supradomain. Zn(2+)-binding residues include C184, C187, C201, H203, C206, C209, C229, C234, C274, C279, C295, C297, C302, C305, H310, C315, C342, and C345. The RING-type 1 zinc-finger motif lies at 184 to 234 (CQICYLNYPNSYFTGLECGHKFCMQCWSEYLTTKIMEEGMGQTISCPAHGC). An IBR-type zinc finger spans residues 254 to 315 (LKYQHLITNS…GENWHDPVKC (62 aa)). An RING-type 2; atypical zinc finger spans residues 342 to 373 (CPKCHVTIEKDGGCNHMVCRNQNCKAEFCWVC). The active site involves C355. C360, C365, C370, C373, H380, and C387 together coordinate Zn(2+). The tract at residues 406 to 555 (RAALQRYLFY…EKDLWEYIED (150 aa)) is ariadne domain.

Belongs to the RBR family. Ariadne subfamily. Interacts (via the first RING-type zinc finger) with UBE2L3. Associates with cullin-RING ubiquitin ligase (CRL) complexes containing CUL1, CUL2 and CUL3. Interacts with neddylated CUL1. Interacts with neddylated CUL2. Interacts with neddylated CUL3. Interacts with neddylated CUL4A. In terms of tissue distribution, widely expressed.

The protein localises to the cytoplasm. It localises to the nucleus. The protein resides in the cajal body. It carries out the reaction [E2 ubiquitin-conjugating enzyme]-S-ubiquitinyl-L-cysteine + [acceptor protein]-L-lysine = [E2 ubiquitin-conjugating enzyme]-L-cysteine + [acceptor protein]-N(6)-ubiquitinyl-L-lysine.. The protein operates within protein modification; protein ubiquitination. Autoinhibited by the ariadne domain, which masks the second RING-type zinc finger that contains the active site and inhibits the E3 activity. Inhibition is relieved upon binding to neddylated cullin-RING ubiquitin ligase complexes, which activate the E3 ligase activity of ARIH1. Functionally, E3 ubiquitin-protein ligase, which catalyzes ubiquitination of target proteins together with ubiquitin-conjugating enzyme E2 UBE2L3. Acts as an atypical E3 ubiquitin-protein ligase by working together with cullin-RING ubiquitin ligase (CRL) complexes and initiating ubiquitination of CRL substrates: associates with CRL complexes and specifically mediates addition of the first ubiquitin on CRLs targets. The initial ubiquitin is then elongated by CDC34/UBE2R1 and UBE2R2. E3 ubiquitin-protein ligase activity is activated upon binding to neddylated cullin-RING ubiquitin ligase complexes. Plays a role in protein translation in response to DNA damage by mediating ubiquitination of EIF4E2, the consequences of EIF4E2 ubiquitination are however unclear. According to a report, EIF4E2 ubiquitination leads to promote EIF4E2 cap-binding and protein translation arrest. According to another report EIF4E2 ubiquitination leads to its subsequent degradation. Acts as the ligase involved in ISGylation of EIF4E2. In vitro, controls the degradation of the LINC (LInker of Nucleoskeleton and Cytoskeleton) complex member SUN2 and may therefore have a role in the formation and localization of the LINC complex, and as a consequence, may act in nuclear subcellular localization and nuclear morphology. The chain is E3 ubiquitin-protein ligase ARIH1 (Arih1) from Mus musculus (Mouse).